A 508-amino-acid polypeptide reads, in one-letter code: Cytochrome P450 monooxygenase orf4 (508 aa).

Residue Cys-447 participates in heme binding.

This sequence belongs to the cytochrome P450 family. Heme serves as cofactor.

The protein operates within mycotoxin biosynthesis. In terms of biological role, cytochrome P450 monooxygenase; part of the gene cluster that mediates the biosynthesis of brefeldin A (BFA), a protein transport inhibitor that shows antiviral, antifungal, and antitumor properties. The proposed biosynthesis of BFA involves formation of an acyclic polyketide chain that is differentially tailored throughout the backbone. The highly reducing polyketide synthase Bref-PKS is proposed to synthesize the precisely reduced octaketide precursor, which could then be directly offloaded by the thiohydrolase enzyme Bref-TH followed by a cytochrome P450 monooxygenase-mediated formation of the cyclopentane ring and macrocyclization to afford 7-deoxy BFA. Alternatively, the first ring annulation can also occur on the ACP-tethered intermediate before the thiohydrolase release and lactonization. The C7-hydroxylation by another cytochrome P450 monooxygenase is believed to be the final step in the process to obtain the final structure of BFA. In addition to the HRPKS Bref-PKS and the thiohydrolase Bref-TH, the brefeldin A biosynthesis cluster contains 4 cytochrome p450 monooxygenases (called orf3 to orf6), as well a the probable cluster-specific transcription regulator orf8. The chain is Cytochrome P450 monooxygenase orf4 from Eupenicillium brefeldianum (Penicillium brefeldianum).